Consider the following 86-residue polypeptide: F(1)-ATPase inhibitor STF1, mitochondrial (86 aa).

Residues 1–23 (MLNRCISRNTRLPVNLRIASRFY) constitute a mitochondrion transit peptide. S24 is modified (phosphoserine).

This sequence belongs to the ATPase inhibitor family. Monomer and homodimer. Monomeric at pH 5.0 and dimeric at either pH 6.5 or 8.0. The protein aggregates increasingly strongly with increasing pH.

It localises to the mitochondrion. Functionally, endogenous low-affinity ATPase inhibitor, which inhibits specifically the reverse ATPase reaction of mitochondrial F(1)F(0)-type ATP synthase. Found to stabilize, together with STF2, a complex of intrinsic ATPase inhibitor INH1 and proton-translocating ATPase in mitochondrial membranes. Binds directly to purified F1-ATPase. The chain is F(1)-ATPase inhibitor STF1, mitochondrial (STF1) from Saccharomyces cerevisiae (strain ATCC 204508 / S288c) (Baker's yeast).